The following is a 199-amino-acid chain: Pre T-cell antigen receptor alpha (199 aa).

The N-terminal stretch at 1–16 (MARTWLLLLLGVRCQA) is a signal peptide. The Extracellular portion of the chain corresponds to 17 to 146 (LPSGIAGTPF…PEPLGGTQRQ (130 aa)). A disulfide bridge links cysteine 47 with cysteine 107. Residues asparagine 67 and asparagine 117 are each glycosylated (N-linked (GlcNAc...) asparagine). The chain crosses the membrane as a helical span at residues 147–167 (VLWLSLLRLLLFKLLLLDVLL). Topologically, residues 168–199 (TCSHLRLHVLAGQHLQPPPSRKSLPPTHRIWT) are cytoplasmic.

Heterodimer with TCRB; disulfide linked. This heterodimer assembles with CD3 proteins into a signaling-competent pre-T-cell receptor complex. Interacts with RHBDD1. As to expression, isoform 1 is expressed at higher levels than isoform 2 in the thymus while only isoform 2 is expressed in polyclonal beta-only cells. Isoform 1 shows a predominant expression in immature thymocytes.

It localises to the membrane. The protein resides in the cell membrane. Component of the pre-T-cell receptor complex (composed of PTCRA, TCRB and the CD3 complex) that plays a crucial role in early T-cell development, particularly alpha-beta T cell differentiation. Isoform 1 acts to retain most TCRB intracellularly, while isoform 2 permits higher levels of cell surface TCRB expression and facilitates signaling from the CD3-TCRB complex. This Mus musculus (Mouse) protein is Pre T-cell antigen receptor alpha.